Reading from the N-terminus, the 96-residue chain is Putative pterin-4-alpha-carbinolamine dehydratase (96 aa).

It belongs to the pterin-4-alpha-carbinolamine dehydratase family.

The enzyme catalyses (4aS,6R)-4a-hydroxy-L-erythro-5,6,7,8-tetrahydrobiopterin = (6R)-L-erythro-6,7-dihydrobiopterin + H2O. This chain is Putative pterin-4-alpha-carbinolamine dehydratase, found in Rhodospirillum rubrum (strain ATCC 11170 / ATH 1.1.1 / DSM 467 / LMG 4362 / NCIMB 8255 / S1).